The following is a 394-amino-acid chain: ATP-dependent RNA helicase fal1 (394 aa).

The short motif at serine 21–serine 49 is the Q motif element. One can recognise a Helicase ATP-binding domain in the interval isoleucine 52–isoleucine 222. Alanine 65–threonine 72 is an ATP binding site. Serine 67 carries the post-translational modification Phosphoserine. A DEAD box motif is present at residues aspartate 170–aspartate 173. A Helicase C-terminal domain is found at glycine 233 to valine 394.

The protein belongs to the DEAD box helicase family. DDX48/FAL1 subfamily.

It localises to the nucleus. The protein localises to the nucleolus. The enzyme catalyses ATP + H2O = ADP + phosphate + H(+). Its function is as follows. ATP-dependent RNA helicase involved in 40S ribosomal subunit biogenesis. Required for the processing and cleavage of 35S pre-rRNA at sites A0, A1, and A2, leading to mature 18S rRNA. This is ATP-dependent RNA helicase fal1 (tif412) from Schizosaccharomyces pombe (strain 972 / ATCC 24843) (Fission yeast).